The chain runs to 292 residues: 4-hydroxy-tetrahydrodipicolinate synthase (292 aa).

Thr-45 provides a ligand contact to pyruvate. Tyr-133 acts as the Proton donor/acceptor in catalysis. The Schiff-base intermediate with substrate role is filled by Lys-161. Ile-203 is a binding site for pyruvate.

The protein belongs to the DapA family. As to quaternary structure, homodimer.

The protein localises to the cytoplasm. It catalyses the reaction L-aspartate 4-semialdehyde + pyruvate = (2S,4S)-4-hydroxy-2,3,4,5-tetrahydrodipicolinate + H2O + H(+). It functions in the pathway amino-acid biosynthesis; L-lysine biosynthesis via DAP pathway; (S)-tetrahydrodipicolinate from L-aspartate: step 3/4. Functionally, catalyzes the condensation of (S)-aspartate-beta-semialdehyde [(S)-ASA] and pyruvate to 4-hydroxy-tetrahydrodipicolinate (HTPA). This is 4-hydroxy-tetrahydrodipicolinate synthase from Pseudomonas aeruginosa (strain ATCC 15692 / DSM 22644 / CIP 104116 / JCM 14847 / LMG 12228 / 1C / PRS 101 / PAO1).